The following is a 726-amino-acid chain: MLLCLTLLFSASAVLAMPTPEGSPHHEIYKVCVPEGALESCHRMSQESDLHMTCVAARDRIECLDKIKHREADFAPVDPEDMYVAAKIPQQDFIIFKEIRTKEEPDEEFRYEAVCVIHKDLDITSIHGLQGLKSCHTGVGRNVGYKIPITKLRHMGVLGPLNNSDLTPRENELHALSHLFSEACLVGKWAPDPAQNQALKAKYPNLCALCEHPEICDYPDKYSGYDGALRCLAEHGGQVAWTKVYYVKKHFGMAIGAGEAVPTGQNPDDYAYLCPDATKKPITGKPCIWAARPWQGYMANHDLDNDIADLRAKISLADTIGETENADWLSKVLDLNNKTIPIDNQGPYSPENYLNKANYTDVIERDTGAPHRPVRFCVTSDAELEKCRVLKRAAYSRDIRPAFDCVREAGLHECLRTVRDDGADVITLDGGEVFVAQRQYNLKPIVAEQYGEHGSLYYAVAVVRKDSTYQSIEDLRGAKSCHTGYGRNAGWNVPLYTLLSKELISKNSCPYSSALSSYFSGGSCVPGAQLPENNPANQNPDSLCSICAGNLDAPNNDPAWKCSASNDESFFGYSGAFRCLASGEGQVAFVKHTTVPENTDGHNQAAWTAGLRSEDFELLCADGGRASINEYSRCHLAEVPPHMVVTSNDKTDIQLNEIRHAILAAGDLYSRRPDLFKLFGDFGGTKDLLFKNSATGLLSVENGSPLMQRYSEILEVIRACENQPTP.

The N-terminal stretch at Met-1–Ala-16 is a signal peptide. Transferrin-like domains lie at Tyr-29–Thr-367 and Val-374–Ala-719. Cystine bridges form between Cys-32–Cys-63 and Cys-41–Cys-54. Fe(3+) is bound by residues Asp-78 and Tyr-111. 4 disulfide bridges follow: Cys-135–Cys-231, Cys-184–Cys-210, Cys-207–Cys-216, and Cys-274–Cys-287. 4 residues coordinate hydrogencarbonate: Thr-137, Arg-141, Val-143, and Gly-144. N-linked (GlcNAc...) asparagine glycosylation is present at Asn-162. Tyr-225 contacts Fe(3+). N-linked (GlcNAc...) asparagine glycosylation is found at Asn-337 and Asn-358. Cystine bridges form between Cys-377–Cys-414 and Cys-387–Cys-405. Residues Asp-429 and Tyr-457 each contribute to the Fe(3+) site. An intrachain disulfide couples Cys-481 to Cys-562. Residues Thr-483, Arg-487, Ala-489, and Gly-490 each contribute to the hydrogencarbonate site. Residues Tyr-573 and His-642 each coordinate Fe(3+).

The protein belongs to the transferrin family.

It is found in the secreted. Transferrins are iron binding transport proteins which bind Fe(3+) ion in association with the binding of an anion, usually bicarbonate. This chain is Transferrin, found in Blaberus discoidalis (Tropical cockroach).